Consider the following 707-residue polypeptide: Ribosomal RNA large subunit methyltransferase K/L (707 aa).

The region spanning 44–155 (VIYNLCLWSR…NDILTVSFDL (112 aa)) is the THUMP domain.

This sequence belongs to the methyltransferase superfamily. RlmKL family.

Its subcellular location is the cytoplasm. It catalyses the reaction guanosine(2445) in 23S rRNA + S-adenosyl-L-methionine = N(2)-methylguanosine(2445) in 23S rRNA + S-adenosyl-L-homocysteine + H(+). It carries out the reaction guanosine(2069) in 23S rRNA + S-adenosyl-L-methionine = N(2)-methylguanosine(2069) in 23S rRNA + S-adenosyl-L-homocysteine + H(+). Its function is as follows. Specifically methylates the guanine in position 2445 (m2G2445) and the guanine in position 2069 (m7G2069) of 23S rRNA. This Legionella pneumophila (strain Paris) protein is Ribosomal RNA large subunit methyltransferase K/L.